The primary structure comprises 269 residues: MTRIAIVGVAGRMGRTLVNAVQQDPEASLGGGIVEPGSSLVGADLGELAGVGRLGVNATDDPAAIADAFDVLIDFTAPRVTLANLAFCAEHGKAIVIGTTGLSDDELAELDGYRERVPMVFAPNMSVGVNLTLKLLETAARALGDEGYDIEVSEAHHRHKVDAPSGTALKMGEVVAKALSRDLKEDGVFERVGQCGPRGDKEIGFATVRAGDIVGEHTVMFATEGERIEITHKASSRMTFAKGAVRAARWVASRGNGRYDMQDVLGLKG.

NAD(+) is bound by residues 8-13 (GVAGRM), 98-100 (GTT), and 122-125 (APNM). His156 (proton donor/acceptor) is an active-site residue. His157 provides a ligand contact to (S)-2,3,4,5-tetrahydrodipicolinate. Residue Lys160 is the Proton donor of the active site. 166-167 (GT) is a binding site for (S)-2,3,4,5-tetrahydrodipicolinate.

It belongs to the DapB family.

It is found in the cytoplasm. It carries out the reaction (S)-2,3,4,5-tetrahydrodipicolinate + NAD(+) + H2O = (2S,4S)-4-hydroxy-2,3,4,5-tetrahydrodipicolinate + NADH + H(+). The enzyme catalyses (S)-2,3,4,5-tetrahydrodipicolinate + NADP(+) + H2O = (2S,4S)-4-hydroxy-2,3,4,5-tetrahydrodipicolinate + NADPH + H(+). It functions in the pathway amino-acid biosynthesis; L-lysine biosynthesis via DAP pathway; (S)-tetrahydrodipicolinate from L-aspartate: step 4/4. In terms of biological role, catalyzes the conversion of 4-hydroxy-tetrahydrodipicolinate (HTPA) to tetrahydrodipicolinate. The polypeptide is 4-hydroxy-tetrahydrodipicolinate reductase (Chromohalobacter salexigens (strain ATCC BAA-138 / DSM 3043 / CIP 106854 / NCIMB 13768 / 1H11)).